Here is a 734-residue protein sequence, read N- to C-terminus: Photosystem I P700 chlorophyll a apoprotein A2 (734 aa).

The next 8 membrane-spanning stretches (helical) occupy residues Ile-46–Ala-69, Leu-135–Gln-158, Leu-175–Ile-199, Ile-273–Tyr-291, Leu-330–Tyr-353, Ala-369–Ile-395, Ala-417–His-439, and Phe-517–Val-535. [4Fe-4S] cluster is bound by residues Cys-559 and Cys-568. The next 2 helical transmembrane spans lie at Ala-575 to Trp-596 and Leu-643 to Ile-665. 3 residues coordinate chlorophyll a: His-654, Met-662, and Tyr-670. Trp-671 lines the phylloquinone pocket. A helical transmembrane segment spans residues Leu-707 to Ala-727.

Belongs to the PsaA/PsaB family. As to quaternary structure, the PsaA/B heterodimer binds the P700 chlorophyll special pair and subsequent electron acceptors. PSI consists of a core antenna complex that captures photons, and an electron transfer chain that converts photonic excitation into a charge separation. The eukaryotic PSI reaction center is composed of at least 11 subunits. P700 is a chlorophyll a/chlorophyll a' dimer, A0 is one or more chlorophyll a, A1 is one or both phylloquinones and FX is a shared 4Fe-4S iron-sulfur center. is required as a cofactor.

It is found in the plastid. Its subcellular location is the chloroplast thylakoid membrane. It catalyses the reaction reduced [plastocyanin] + hnu + oxidized [2Fe-2S]-[ferredoxin] = oxidized [plastocyanin] + reduced [2Fe-2S]-[ferredoxin]. PsaA and PsaB bind P700, the primary electron donor of photosystem I (PSI), as well as the electron acceptors A0, A1 and FX. PSI is a plastocyanin-ferredoxin oxidoreductase, converting photonic excitation into a charge separation, which transfers an electron from the donor P700 chlorophyll pair to the spectroscopically characterized acceptors A0, A1, FX, FA and FB in turn. Oxidized P700 is reduced on the lumenal side of the thylakoid membrane by plastocyanin. In Coffea arabica (Arabian coffee), this protein is Photosystem I P700 chlorophyll a apoprotein A2.